Consider the following 906-residue polypeptide: Ribonucleoside-diphosphate reductase large subunit-like protein (906 aa).

Disordered regions lie at residues 1 to 70 and 89 to 129; these read MNPA…AGNT and VSWR…LSTF. The span at 98 to 109 shows a compositional bias: polar residues; sequence PDGTPSVLSLTR.

Belongs to the ribonucleoside diphosphate reductase large chain family.

It localises to the virion. The protein resides in the host cytoplasm. Does not possess a ribonucleotide reductase activity. Betaherpesviruses probably use another strategy to expand the dNTP pool in a quiescent host cell. The polypeptide is Ribonucleoside-diphosphate reductase large subunit-like protein (Human cytomegalovirus (strain AD169) (HHV-5)).